The chain runs to 222 residues: 2-hydroxy-3-keto-5-methylthiopentenyl-1-phosphate phosphatase (222 aa).

It belongs to the HAD-like hydrolase superfamily. MtnX family.

It carries out the reaction 2-hydroxy-5-methylsulfanyl-3-oxopent-1-enyl phosphate + H2O = 1,2-dihydroxy-5-(methylsulfanyl)pent-1-en-3-one + phosphate. It functions in the pathway amino-acid biosynthesis; L-methionine biosynthesis via salvage pathway; L-methionine from S-methyl-5-thio-alpha-D-ribose 1-phosphate: step 4/6. In terms of biological role, dephosphorylates 2-hydroxy-3-keto-5-methylthiopentenyl-1-phosphate (HK-MTPenyl-1-P) yielding 1,2-dihydroxy-3-keto-5-methylthiopentene (DHK-MTPene). The polypeptide is 2-hydroxy-3-keto-5-methylthiopentenyl-1-phosphate phosphatase (Brevibacillus brevis (strain 47 / JCM 6285 / NBRC 100599)).